The primary structure comprises 385 residues: MVEDFKVTPWEVEGVVDYNKLIEHFGTSPLTEELLEKTAELTKSELPLFFRRKFFFSHRDYDKVLQDYEEGRGFFLYTGRGPSGPMHIGHIIPFFATKWLQEKFGVNLYIQITDDEKFLFKENLTFEDTKHWAYENILDIIAVGFDPDKTFIFQNSEFTKIYEMAIPIAKKINFSMAKAVFGFTEQSKIGMIFFPAIQIAPTFFEKRRCLIPAAIDQDPYWRLQRDFAESLGYYKTAAIHSKFVPSLTSLSGKMSASKPETAIYLTDSPEDVEKKVWKFALTGGRPTLKEQREKGGEPEKCVVFKWLEIFFEEDDKKLKERYYACKNGELTCGECKRYLISKIQEFLKEHQKRRKKAEKQIEKFKYTGKLAQEMWDKAIPEPLKG.

The short motif at 82–90 is the 'HIGH' region element; it reads PSGPMHIGH. Positions 253 to 257 match the 'KMSKS' region motif; sequence KMSAS.

This sequence belongs to the class-I aminoacyl-tRNA synthetase family.

It is found in the cytoplasm. The enzyme catalyses tRNA(Trp) + L-tryptophan + ATP = L-tryptophyl-tRNA(Trp) + AMP + diphosphate + H(+). The protein is Tryptophan--tRNA ligase of Pyrococcus abyssi (strain GE5 / Orsay).